Reading from the N-terminus, the 876-residue chain is Alanine--tRNA ligase (876 aa).

H564, H568, C666, and H670 together coordinate Zn(2+).

The protein belongs to the class-II aminoacyl-tRNA synthetase family. As to quaternary structure, homotetramer. The cofactor is Zn(2+).

It is found in the cytoplasm. It catalyses the reaction tRNA(Ala) + L-alanine + ATP = L-alanyl-tRNA(Ala) + AMP + diphosphate. Functionally, catalyzes the attachment of alanine to tRNA(Ala) in a two-step reaction: alanine is first activated by ATP to form Ala-AMP and then transferred to the acceptor end of tRNA(Ala). Also edits incorrectly charged Ser-tRNA(Ala) and Gly-tRNA(Ala) via its editing domain. The polypeptide is Alanine--tRNA ligase (Salmonella paratyphi A (strain ATCC 9150 / SARB42)).